A 136-amino-acid chain; its full sequence is MKKLLMVILGIALIGMAYAFPPWMAYQTQTTENTDINPVDILKTAEVVQHTTPFGYNLSHLEIDGKIVGVLWKDVDLSKLEVGEPFNTPFGEKYPLYYDRELVGFIFTNHPASHYGYGMRGGYGCHCHCGCCCWQQ.

The first 19 residues, 1–19 (MKKLLMVILGIALIGMAYA), serve as a signal peptide directing secretion.

This is an uncharacterized protein from Methanocaldococcus jannaschii (strain ATCC 43067 / DSM 2661 / JAL-1 / JCM 10045 / NBRC 100440) (Methanococcus jannaschii).